The following is a 540-amino-acid chain: (13S,14R)-13-O-acetyl-1-hydroxy-N-methylcanadine 8-hydroxylase CYP82X1 (540 aa).

Residues 15 to 35 (FSIILVTTVSIVLLYSVFFWV) form a helical membrane-spanning segment. Residue Cys-483 coordinates heme.

It belongs to the cytochrome P450 family. It depends on heme as a cofactor. As to expression, highly expressed in capsules. Expressed is stems.

Its subcellular location is the membrane. The catalysed reaction is (13S,14R)-13-O-acetyl-1-hydroxy-N-methylcanadine + reduced [NADPH--hemoprotein reductase] + O2 = (13S,14R)-13-O-acetyl-1,8-dihydroxy-N-methylcanadine + oxidized [NADPH--hemoprotein reductase] + H2O + H(+). The protein operates within alkaloid biosynthesis. In terms of biological role, cytochrome P450 involved in the biosynthesis of the benzylisoquinoline alkaloid noscapine. Converts (13S,14R)-13-O-acetyl-1-hydroxy-N-methylcanadine to (13S,14R)-13-O-acetyl-1,8-dihydroxy-N-methylcanadine. The protein is (13S,14R)-13-O-acetyl-1-hydroxy-N-methylcanadine 8-hydroxylase CYP82X1 of Papaver somniferum (Opium poppy).